The sequence spans 319 residues: Cytochrome c biogenesis protein CcsA (319 aa).

7 consecutive transmembrane segments (helical) span residues isoleucine 9–leucine 29, glycine 44–glycine 64, leucine 71–phenylalanine 91, methionine 143–isoleucine 163, isoleucine 225–asparagine 245, threonine 259–histidine 273, and alanine 286–leucine 306.

Belongs to the CcmF/CycK/Ccl1/NrfE/CcsA family. May interact with Ccs1.

It localises to the plastid. It is found in the chloroplast thylakoid membrane. Functionally, required during biogenesis of c-type cytochromes (cytochrome c6 and cytochrome f) at the step of heme attachment. This Oenothera biennis (German evening primrose) protein is Cytochrome c biogenesis protein CcsA.